The sequence spans 97 residues: Small cell adhesion glycoprotein (97 aa).

Residues 1–36 lie on the Extracellular side of the membrane; the sequence is MNNLPATPSPEELMTTPVFQAPETLSPQAEEASTAL. An O-linked (GalNAc...) threonine glycan is attached at Thr-7. O-linked (GalNAc...) serine glycosylation occurs at Ser-9. Thr-15, Thr-16, and Thr-24 each carry an O-linked (GalNAc...) threonine glycan. Ser-26 carries O-linked (GalNAc...) serine glycosylation. Residues 37-57 traverse the membrane as a helical; Signal-anchor for type III membrane protein segment; sequence IAVVITVVFLTLLSVVTLIFF. Residues 58–97 are Cytoplasmic-facing; the sequence is HLYKNKGSYVTYEPAEGEPSAILQMETDSAKGREKEEYFI.

Belongs to the SMAGP family. O-glycosylated. The O-glycan is modified with sialic acid residues.

The protein localises to the cell membrane. It localises to the cytoplasmic vesicle membrane. Its function is as follows. May play a role in epithelial cell-cell contacts. May play a role in tumor invasiveness and metastasis formation. The sequence is that of Small cell adhesion glycoprotein (Smagp) from Mus musculus (Mouse).